Consider the following 86-residue polypeptide: CRISPR-associated endoribonuclease Cas2 (86 aa).

Residue Asp8 participates in Mg(2+) binding.

The protein belongs to the CRISPR-associated endoribonuclease Cas2 protein family. In terms of assembly, homodimer, forms a heterotetramer with a Cas1 homodimer. The cofactor is Mg(2+).

In terms of biological role, CRISPR (clustered regularly interspaced short palindromic repeat), is an adaptive immune system that provides protection against mobile genetic elements (viruses, transposable elements and conjugative plasmids). CRISPR clusters contain sequences complementary to antecedent mobile elements and target invading nucleic acids. CRISPR clusters are transcribed and processed into CRISPR RNA (crRNA). Functions as a ssRNA-specific endoribonuclease. Involved in the integration of spacer DNA into the CRISPR cassette. Plasmid targeted by CRISPR locus P1 transform wild-type cells very poorly. This chain is CRISPR-associated endoribonuclease Cas2, found in Haloferax volcanii (strain ATCC 29605 / DSM 3757 / JCM 8879 / NBRC 14742 / NCIMB 2012 / VKM B-1768 / DS2) (Halobacterium volcanii).